Reading from the N-terminus, the 598-residue chain is Aluminum-activated malate transporter 9 (598 aa).

6 helical membrane-spanning segments follow: residues 88 to 108 (IVFS…IFYQ), 117 to 137 (YSVW…GATL), 144 to 164 (ALGT…STLF), 170 to 190 (IFCT…KLYP), 194 to 214 (AYEY…ISGF), and 227 to 247 (FLLI…IYPI).

The protein belongs to the aromatic acid exporter (TC 2.A.85) family. In terms of tissue distribution, expressed in hypocotyls, leaves, roots, flowers, sepals and stamina. In leaves, expressed almost exclusively in mesophyll cells.

It localises to the vacuole membrane. Its activity is regulated as follows. Slow activation by external aluminum. Functionally, vacuolar malate channel. Has a higher selectivity for malate than for fumarate. Also exhibits a weak chloride conductance. The sequence is that of Aluminum-activated malate transporter 9 (ALMT9) from Arabidopsis thaliana (Mouse-ear cress).